Reading from the N-terminus, the 275-residue chain is Light-independent protochlorophyllide reductase iron-sulfur ATP-binding protein (275 aa).

ATP contacts are provided by residues 12-17 (GIGKST) and Lys-41. Ser-16 is a Mg(2+) binding site. The [4Fe-4S] cluster site is built by Cys-97 and Cys-131. ATP is bound at residue 182–183 (NR).

Belongs to the NifH/BchL/ChlL family. Homodimer. Protochlorophyllide reductase is composed of three subunits; BchL, BchN and BchB. It depends on [4Fe-4S] cluster as a cofactor.

The catalysed reaction is chlorophyllide a + oxidized 2[4Fe-4S]-[ferredoxin] + 2 ADP + 2 phosphate = protochlorophyllide a + reduced 2[4Fe-4S]-[ferredoxin] + 2 ATP + 2 H2O. The protein operates within porphyrin-containing compound metabolism; bacteriochlorophyll biosynthesis (light-independent). Its function is as follows. Component of the dark-operative protochlorophyllide reductase (DPOR) that uses Mg-ATP and reduced ferredoxin to reduce ring D of protochlorophyllide (Pchlide) to form chlorophyllide a (Chlide). This reaction is light-independent. The L component serves as a unique electron donor to the NB-component of the complex, and binds Mg-ATP. The chain is Light-independent protochlorophyllide reductase iron-sulfur ATP-binding protein from Pelodictyon phaeoclathratiforme (strain DSM 5477 / BU-1).